A 491-amino-acid chain; its full sequence is Probable V-type proton ATPase subunit B 1 (491 aa).

An ATP-binding site is contributed by R380.

It belongs to the ATPase alpha/beta chains family. In terms of assembly, V-ATPase is a heteromultimeric enzyme made up of two complexes: the ATP-hydrolytic V1 complex and the proton translocation V0 complex. The V1 complex consists of three catalytic AB heterodimers that form a heterohexamer, three peripheral stalks each consisting of EG heterodimers, one central rotor including subunits D and F, and the regulatory subunits C and H. The proton translocation complex V0 consists of the proton transport subunit a, a ring of proteolipid subunits c9c'', rotary subunit d, subunits e and f, and the accessory subunits vah-19/Ac45 and vah-20/PRR.

Functionally, non-catalytic subunit of the V1 complex of vacuolar(H+)-ATPase (V-ATPase), a multisubunit enzyme composed of a peripheral complex (V1) that hydrolyzes ATP and a membrane integral complex (V0) that translocates protons. V-ATPase is responsible for acidifying and maintaining the pH of intracellular compartments and in some cell types, is targeted to the plasma membrane, where it is responsible for acidifying the extracellular environment. Essential for the proper assembly and activity of V-ATPase. Required maternally for early embryogenesis and zygotically during morphogenesis. Specifically, involved in the clearance of apoptotic cell corpses in embryos. Also, during embryonic development, the V-ATPase is required to repress fusion of epidermal cells probably by negatively regulating eff-1-mediated cell fusion. In neurons, required for necrotic cell death by promoting intracellular acidification. Required for cell death induced by hypoxia. Required for acidification of synaptic vesicles and the release of neurotransmitters from adult neurons. The protein is Probable V-type proton ATPase subunit B 1 of Caenorhabditis briggsae.